Reading from the N-terminus, the 510-residue chain is Probable malate:quinone oxidoreductase (510 aa).

The protein belongs to the MQO family. It depends on FAD as a cofactor.

It catalyses the reaction (S)-malate + a quinone = a quinol + oxaloacetate. Its pathway is carbohydrate metabolism; tricarboxylic acid cycle; oxaloacetate from (S)-malate (quinone route): step 1/1. This chain is Probable malate:quinone oxidoreductase, found in Wigglesworthia glossinidia brevipalpis.